A 176-amino-acid polypeptide reads, in one-letter code: Ribosome maturation factor RimM (176 aa).

The 80-residue stretch at 97-176 folds into the PRC barrel domain; the sequence is EDEFYWRDLI…QITVDWDPDF (80 aa).

This sequence belongs to the RimM family. In terms of assembly, binds ribosomal protein uS19.

Its subcellular location is the cytoplasm. In terms of biological role, an accessory protein needed during the final step in the assembly of 30S ribosomal subunit, possibly for assembly of the head region. Essential for efficient processing of 16S rRNA. May be needed both before and after RbfA during the maturation of 16S rRNA. It has affinity for free ribosomal 30S subunits but not for 70S ribosomes. The chain is Ribosome maturation factor RimM from Shewanella sediminis (strain HAW-EB3).